The following is a 259-amino-acid chain: MTVGSLPAPLVKPSAPRPLLPILVAAIALALPCSITAADDALAPQRADMVREIAAVAAAAAAQSGRHAIDPRVMAVMGQVPRHEFVPDAQKPHAYENRPLPIGHGQTISQPYIVALMTDLMMVKPGDTVLEIGTGSGYQAAVLTGLARAVYTIEIIEPLGRHACDRLKRLAYRQVACKVGDGYYGWDEHAPYDAIVVTAAASHVPPPLIRQLKPGGRMVIPVGAQFLTQYLLLVEKSEDGTVSTRQILPVRFVPLVGKH.

S109 is an active-site residue.

Belongs to the methyltransferase superfamily. L-isoaspartyl/D-aspartyl protein methyltransferase family.

It localises to the cytoplasm. It carries out the reaction [protein]-L-isoaspartate + S-adenosyl-L-methionine = [protein]-L-isoaspartate alpha-methyl ester + S-adenosyl-L-homocysteine. Its function is as follows. Catalyzes the methyl esterification of L-isoaspartyl residues in peptides and proteins that result from spontaneous decomposition of normal L-aspartyl and L-asparaginyl residues. It plays a role in the repair and/or degradation of damaged proteins. The polypeptide is Protein-L-isoaspartate O-methyltransferase 1 (Cupriavidus necator (strain ATCC 17699 / DSM 428 / KCTC 22496 / NCIMB 10442 / H16 / Stanier 337) (Ralstonia eutropha)).